A 301-amino-acid chain; its full sequence is Oxygen-dependent coproporphyrinogen-III oxidase (301 aa).

Ser-90 contacts substrate. Residues His-94 and His-104 each contribute to the a divalent metal cation site. His-104 serves as the catalytic Proton donor. Substrate is bound at residue 106–108; sequence NVR. A divalent metal cation contacts are provided by His-143 and His-173. An important for dimerization region spans residues 238 to 273; it reads YVEFNLVWDRGTLFGLQSGGRTESILMSLPPIVKWR. 256–258 contacts substrate; that stretch reads GGR.

The protein belongs to the aerobic coproporphyrinogen-III oxidase family. Homodimer. The cofactor is a divalent metal cation.

Its subcellular location is the cytoplasm. The catalysed reaction is coproporphyrinogen III + O2 + 2 H(+) = protoporphyrinogen IX + 2 CO2 + 2 H2O. Its pathway is porphyrin-containing compound metabolism; protoporphyrin-IX biosynthesis; protoporphyrinogen-IX from coproporphyrinogen-III (O2 route): step 1/1. In terms of biological role, involved in the heme biosynthesis. Catalyzes the aerobic oxidative decarboxylation of propionate groups of rings A and B of coproporphyrinogen-III to yield the vinyl groups in protoporphyrinogen-IX. This is Oxygen-dependent coproporphyrinogen-III oxidase from Nitrosomonas eutropha (strain DSM 101675 / C91 / Nm57).